Here is a 134-residue protein sequence, read N- to C-terminus: Acyl carrier protein, chloroplastic (134 aa).

The transit peptide at 1–51 (MATTFSASVSTLATSLATPTRISFQKPALVSRTNLSFNLRRSIPTRLSVSC) directs the protein to the chloroplast. In terms of domain architecture, Carrier spans 55-130 (PETIEKVSKI…EAAELIEELV (76 aa)). At serine 90 the chain carries O-(pantetheine 4'-phosphoryl)serine.

This sequence belongs to the acyl carrier protein (ACP) family. Post-translationally, 4'-phosphopantetheine is transferred from CoA to a specific serine of apo-ACP by acpS. This modification is essential for activity because fatty acids are bound in thioester linkage to the sulfhydryl of the prosthetic group. As to expression, seed.

Its subcellular location is the plastid. The protein localises to the chloroplast. It functions in the pathway lipid metabolism; fatty acid biosynthesis. Its function is as follows. Carrier of the growing fatty acid chain in fatty acid biosynthesis. This chain is Acyl carrier protein, chloroplastic (ACL1.A3), found in Brassica napus (Rape).